Consider the following 213-residue polypeptide: ER lumen protein-retaining receptor erd-2.2 (213 aa).

At 1 to 2 (MN) the chain is on the lumenal side. The helical transmembrane segment at 3–21 (IFRISADMSHLLAIIILLL) threads the bilayer. The Cytoplasmic segment spans residues 22–35 (KIWKSRSCSGISAR). A helical membrane pass occupies residues 36-53 (SQILFALVFTARYLDLFS). The Lumenal portion of the chain corresponds to 54–61 (TYISLYNT). Residues 62–80 (TMKITFLAATYATVYLMFF) form a helical membrane-spanning segment. Topologically, residues 81–96 (KFRSTYMRESDTFRVE) are cytoplasmic. The chain crosses the membrane as a helical span at residues 97–110 (LLIVPAAILALLIN). Topologically, residues 111 to 117 (HDFAPFE) are lumenal. The helical transmembrane segment at 118–137 (LLWTFSIYLEAVAILPQLFL) threads the bilayer. The Cytoplasmic portion of the chain corresponds to 138–149 (LQSTGSAEVITA). Residues 150–168 (HYLFALGSYRALYIFNWIY) form a helical membrane-spanning segment. Over 169–178 (RYYTEDYFDP) the chain is Lumenal. The helical transmembrane segment at 179 to 199 (IVVVAGIVQTVLYADFFYLYV) threads the bilayer. Residues 200 to 213 (TRVVQTRKGMELPI) lie on the Cytoplasmic side of the membrane.

The protein belongs to the ERD2 family.

Its subcellular location is the endoplasmic reticulum membrane. In terms of biological role, required for the retention of luminal endoplasmic reticulum proteins. Determines the specificity of the luminal ER protein retention system. Also required for normal vesicular traffic through the Golgi. This is ER lumen protein-retaining receptor erd-2.2 from Caenorhabditis elegans.